Here is a 388-residue protein sequence, read N- to C-terminus: Chorismate synthase (388 aa).

Residues Arg39 and Arg45 each coordinate NADP(+). Residues 130–132 (RSS), 251–252 (NA), Gly296, 311–315 (KPIPT), and Arg337 each bind FMN.

The protein belongs to the chorismate synthase family. As to quaternary structure, homotetramer. FMNH2 is required as a cofactor.

The catalysed reaction is 5-O-(1-carboxyvinyl)-3-phosphoshikimate = chorismate + phosphate. Its pathway is metabolic intermediate biosynthesis; chorismate biosynthesis; chorismate from D-erythrose 4-phosphate and phosphoenolpyruvate: step 7/7. Catalyzes the anti-1,4-elimination of the C-3 phosphate and the C-6 proR hydrogen from 5-enolpyruvylshikimate-3-phosphate (EPSP) to yield chorismate, which is the branch point compound that serves as the starting substrate for the three terminal pathways of aromatic amino acid biosynthesis. This reaction introduces a second double bond into the aromatic ring system. This is Chorismate synthase from Streptococcus suis (strain 98HAH33).